The chain runs to 521 residues: Glutamate--tRNA ligase (521 aa).

A 'HIGH' region motif is present at residues 13–23 (PSPSGFLHVGG). The short motif at 253–257 (KLSKR) is the 'KMSKS' region element. Lysine 256 contributes to the ATP binding site.

Belongs to the class-I aminoacyl-tRNA synthetase family. Glutamate--tRNA ligase type 1 subfamily. As to quaternary structure, monomer.

Its subcellular location is the cytoplasm. The catalysed reaction is tRNA(Glu) + L-glutamate + ATP = L-glutamyl-tRNA(Glu) + AMP + diphosphate. In terms of biological role, catalyzes the attachment of glutamate to tRNA(Glu) in a two-step reaction: glutamate is first activated by ATP to form Glu-AMP and then transferred to the acceptor end of tRNA(Glu). The sequence is that of Glutamate--tRNA ligase from Leptospira interrogans serogroup Icterohaemorrhagiae serovar copenhageni (strain Fiocruz L1-130).